The sequence spans 87 residues: Probable Fe(2+)-trafficking protein (87 aa).

The protein belongs to the Fe(2+)-trafficking protein family.

Its function is as follows. Could be a mediator in iron transactions between iron acquisition and iron-requiring processes, such as synthesis and/or repair of Fe-S clusters in biosynthetic enzymes. The protein is Probable Fe(2+)-trafficking protein of Francisella tularensis subsp. novicida (strain U112).